A 588-amino-acid chain; its full sequence is Sulfite reductase [NADPH] hemoprotein beta-component (588 aa).

Cys442, Cys448, Cys487, and Cys491 together coordinate [4Fe-4S] cluster. Residue Cys491 coordinates siroheme.

Belongs to the nitrite and sulfite reductase 4Fe-4S domain family. In terms of assembly, alpha(8)-beta(8). The alpha component is a flavoprotein, the beta component is a hemoprotein. The cofactor is siroheme. Requires [4Fe-4S] cluster as cofactor.

The catalysed reaction is hydrogen sulfide + 3 NADP(+) + 3 H2O = sulfite + 3 NADPH + 4 H(+). The protein operates within sulfur metabolism; hydrogen sulfide biosynthesis; hydrogen sulfide from sulfite (NADPH route): step 1/1. Functionally, component of the sulfite reductase complex that catalyzes the 6-electron reduction of sulfite to sulfide. This is one of several activities required for the biosynthesis of L-cysteine from sulfate. This chain is Sulfite reductase [NADPH] hemoprotein beta-component, found in Actinobacillus pleuropneumoniae serotype 7 (strain AP76).